The chain runs to 513 residues: Maturase K (513 aa).

The protein belongs to the intron maturase 2 family. MatK subfamily.

The protein resides in the plastid. Its subcellular location is the chloroplast. In terms of biological role, usually encoded in the trnK tRNA gene intron. Probably assists in splicing its own and other chloroplast group II introns. This is Maturase K from Cyrilla racemiflora (Swamp titi).